A 359-amino-acid chain; its full sequence is Protein Wnt-9b (359 aa).

An N-terminal signal peptide occupies residues 1-23 (MRPAPALALAALCLLVLPAAAAA). Intrachain disulfides connect C91/C102, C137/C145, C147/C164, C212/C226, C214/C221, C293/C318, C307/C313, C317/C357, C333/C348, C335/C345, and C340/C341. A glycan (N-linked (GlcNAc...) asparagine) is linked at N101. S218 carries the O-palmitoleoyl serine; by PORCN lipid modification.

The protein belongs to the Wnt family. Forms a soluble 1:1 complex with AFM; this prevents oligomerization and is required for prolonged biological activity. The complex with AFM may represent the physiological form in body fluids. Component of the Wnt-Fzd-LRP5-LRP6 signaling complex that contains a WNT protein, a FZD protein and LRP5 or LRP6. Interacts directly in the complex with LRP6. Interacts with PKD1 (via extracellular domain). Palmitoleoylation is required for efficient binding to frizzled receptors. Depalmitoleoylation leads to Wnt signaling pathway inhibition.

The protein localises to the secreted. Its subcellular location is the extracellular space. It is found in the extracellular matrix. Its function is as follows. Ligand for members of the frizzled family of seven transmembrane receptors. Functions in the canonical Wnt/beta-catenin signaling pathway. Required for normal embryonic kidney development, and for normal development of the urogenital tract, including uterus and part of the oviduct and the upper vagina in females, and epididymis and vas deferens in males. Activates a signaling cascade in the metanephric mesenchyme that induces tubulogenesis. Acts upstream of WNT4 in the signaling pathways that mediate development of kidney tubules and the Muellerian ducts. Plays a role in cranofacial development and is required for normal fusion of the palate during embryonic development. The sequence is that of Protein Wnt-9b (Wnt9b) from Mus musculus (Mouse).